We begin with the raw amino-acid sequence, 88 residues long: Phosphocarrier protein HPr (88 aa).

The HPr domain occupies 1-88 (MEKKEFHIVA…ETLQKEGLAE (88 aa)). His15 serves as the catalytic Pros-phosphohistidine intermediate. Phosphoserine; by HPrK/P is present on Ser46.

The protein belongs to the HPr family. In terms of assembly, monomer.

Its subcellular location is the cytoplasm. Phosphorylation on Ser-46 inhibits the phosphoryl transfer from enzyme I to HPr. In terms of biological role, general (non sugar-specific) component of the phosphoenolpyruvate-dependent sugar phosphotransferase system (sugar PTS). This major carbohydrate active-transport system catalyzes the phosphorylation of incoming sugar substrates concomitantly with their translocation across the cell membrane. The phosphoryl group from phosphoenolpyruvate (PEP) is transferred to the phosphoryl carrier protein HPr by enzyme I. Phospho-HPr then transfers it to the PTS EIIA domain. P-Ser-HPr interacts with the catabolite control protein A (CcpA), forming a complex that binds to DNA at the catabolite response elements cre, operator sites preceding a large number of catabolite-regulated genes. Thus, P-Ser-HPr is a corepressor in carbon catabolite repression (CCR), a mechanism that allows bacteria to coordinate and optimize the utilization of available carbon sources. P-Ser-HPr also plays a role in inducer exclusion, in which it probably interacts with several non-PTS permeases and inhibits their transport activity. The sequence is that of Phosphocarrier protein HPr (ptsH) from Enterococcus faecalis (strain ATCC 700802 / V583).